The chain runs to 268 residues: Tryptophan synthase alpha chain (268 aa).

Residues Glu-49 and Asp-60 each act as proton acceptor in the active site.

Belongs to the TrpA family. As to quaternary structure, tetramer of two alpha and two beta chains.

The enzyme catalyses (1S,2R)-1-C-(indol-3-yl)glycerol 3-phosphate + L-serine = D-glyceraldehyde 3-phosphate + L-tryptophan + H2O. It functions in the pathway amino-acid biosynthesis; L-tryptophan biosynthesis; L-tryptophan from chorismate: step 5/5. The alpha subunit is responsible for the aldol cleavage of indoleglycerol phosphate to indole and glyceraldehyde 3-phosphate. The protein is Tryptophan synthase alpha chain of Xylella fastidiosa (strain 9a5c).